The chain runs to 426 residues: Adenylosuccinate synthetase (426 aa).

GTP contacts are provided by residues 18-24 and 46-48; these read GDEGKGK and GHT. Asp19 (proton acceptor) is an active-site residue. Residues Asp19 and Gly46 each contribute to the Mg(2+) site. Residues 19–22, 44–47, Thr136, Arg150, Gln222, Thr237, and Arg301 contribute to the IMP site; these read DEGK and NAGH. His47 acts as the Proton donor in catalysis. Position 297 to 303 (297 to 303) interacts with substrate; it reads VTTKRKR. Residues Arg303, 329 to 331, and 413 to 415 contribute to the GTP site; these read KID and GTG.

Belongs to the adenylosuccinate synthetase family. Homodimer. Requires Mg(2+) as cofactor.

It is found in the cytoplasm. The catalysed reaction is IMP + L-aspartate + GTP = N(6)-(1,2-dicarboxyethyl)-AMP + GDP + phosphate + 2 H(+). The protein operates within purine metabolism; AMP biosynthesis via de novo pathway; AMP from IMP: step 1/2. In terms of biological role, plays an important role in the de novo pathway and in the salvage pathway of purine nucleotide biosynthesis. Catalyzes the first committed step in the biosynthesis of AMP from IMP. In Schistosoma mansoni (Blood fluke), this protein is Adenylosuccinate synthetase.